Reading from the N-terminus, the 558-residue chain is Protein SET DOMAIN GROUP 41 (558 aa).

In terms of domain architecture, SET spans 115 to 249; sequence PSISVAIHHA…SGEEITVSYI (135 aa).

It belongs to the class V-like SAM-binding methyltransferase superfamily.

The polypeptide is Protein SET DOMAIN GROUP 41 (SDG41) (Arabidopsis thaliana (Mouse-ear cress)).